Here is a 129-residue protein sequence, read N- to C-terminus: Virion-associated protein (129 aa).

2 coiled-coil regions span residues 1–31 (MANL…ILEM) and 38–59 (IKES…LIND). The tract at residues 122-129 (PAGWPNQF) is capsid binding.

This sequence belongs to the caulimovirus ORF III family. As to quaternary structure, homotetramer, through coiled-coil domain. Homotrimer when interacts with icosehadral capsid. Interacts with capsid protein, and with Movement protein.

It is found in the virion. It localises to the host cell junction. The protein localises to the host plasmodesma. Plays a role in virus cell-to-cell and plant-to-plant transmission. Interacts with virion icosahedral capsid and movement protein, thereby facilitating virion cell-to-cell transmission through plasmodesmata opened by viral movement protein. Also interacts with aphid transmission factor, attaching the virion to aphid stylet when the animal feeds on an virus infected plant. Aphid saliva may later detach the virion, inducing release of infectious particles when the animal feeds on a new plant. The sequence is that of Virion-associated protein from Arabidopsis thaliana (Mouse-ear cress).